The chain runs to 1851 residues: Chitin synthase (1851 aa).

A disordered region spans residues 1-21 (MQYHQHQHQFPGPGPSHTSVY). The Cytoplasmic portion of the chain corresponds to 1-108 (MQYHQHQHQF…KDTLYNGFLQ (108 aa)). The helical transmembrane segment at 109–129 (VLKMITFVALFVTTLGSSILA) threads the bilayer. Residues 130–168 (KLSLLVMAAGLGQAGHNISICPDKIPESPKNSVLISPKN) lie on the Extracellular side of the membrane. An N-linked (GlcNAc...) asparagine glycan is attached at Asn146. The helical transmembrane segment at 169–189 (AAKWAWALLLAICIPELLCFA) threads the bilayer. Residues 190 to 208 (RSLHRSLFRKVRGPSFLQF) lie on the Cytoplasmic side of the membrane. The helical transmembrane segment at 209-229 (LLVFTVESVHAFGLGALVFAI) threads the bilayer. Over 230–234 (MPRGM) the chain is Extracellular. A helical membrane pass occupies residues 235–255 (VITMLQLGNSLCLIPSLLLPL). Residues 256–261 (SRSRSR) lie on the Cytoplasmic side of the membrane. Residues 262–282 (WLPLLLLLDGSAILAQSSAAI) form a helical membrane-spanning segment. At 283-291 (WRGSIPLER) the chain is on the extracellular side. Residues 292–312 (FGFVFLCTSLISIAWWQNFVH) form a helical membrane-spanning segment. The Cytoplasmic segment spans residues 313-337 (PHSFLPATRFFAHYAAKLRECRSKT). A helical membrane pass occupies residues 338–358 (FVVLSPWKCLIFTFCMFQFVP). The Extracellular segment spans residues 359–544 (PQIPFRELLQ…ELNQFTTAND (186 aa)). 2 N-linked (GlcNAc...) asparagine glycosylation sites follow: Asn385 and Asn435. The disordered stretch occupies residues 432–522 (LFRNGTRRPP…DADEQEEEEE (91 aa)). A compositionally biased stretch (basic and acidic residues) spans 442 to 454 (KKEEVKKNKMDSK). Residues 455–465 (KKTKKLKKKKG) are compositionally biased toward basic residues. Low complexity predominate over residues 466–478 (GNNNATSTNSSEK). N-linked (GlcNAc...) asparagine glycosylation is found at Asn469 and Asn474. Positions 513–522 (DADEQEEEEE) are enriched in acidic residues. The helical transmembrane segment at 545–565 (ALWLVFVQAGSVLLCQLCAKF) threads the bilayer. Residues 566-573 (ACKVVMQR) lie on the Cytoplasmic side of the membrane. The helical transmembrane segment at 574 to 594 (VGLALPVVLSIPFGILFLAYS) threads the bilayer. The Extracellular segment spans residues 595 to 631 (CRQKATNPCHLSEWMSKELFWQCPTRPFHWQRFFREQ). A helical transmembrane segment spans residues 632–652 (PNLLWLCWWLSQCWITIHLWL). Topologically, residues 653-1124 (PRQERLAKSE…VSIWYIAYQL (472 aa)) are cytoplasmic. The disordered stretch occupies residues 693–718 (SEDIDTEEEANEGGGEQEDGNSSTHT). Residues 696–711 (IDTEEEANEGGGEQED) are compositionally biased toward acidic residues. Residues 1125 to 1145 (VMLFSSVLGPGTIFLMIVGAI) traverse the membrane as a helical segment. Residues 1146–1154 (SISFNIDTR) are Extracellular-facing. Residues 1155–1175 (LALLIVTTPVLCFCVCCLTCG) traverse the membrane as a helical segment. Over 1176–1179 (TETQ) the chain is Cytoplasmic. Residues 1180-1200 (LLLAQVIGALFAMLMTAVIVG) form a helical membrane-spanning segment. Residues 1201–1209 (TSLQIQKDG) lie on the Extracellular side of the membrane. A helical membrane pass occupies residues 1210–1230 (LLSPHSIFLFTVLGSWSFSAL). Residues 1231-1235 (LHPLE) are Cytoplasmic-facing. A helical membrane pass occupies residues 1236 to 1256 (FGCLLPCGLYFLAIPCMYMLL). Residues 1257 to 1461 (PVYSLCNLNT…QRGLNELRNT (205 aa)) are Extracellular-facing. Asn1274 carries N-linked (GlcNAc...) asparagine glycosylation. Positions 1329 to 1383 (CADETVEVRKLDENFRKIERKLQSLERRTNGQGNNAEEEGKEEEETGKSEQERKE) form a coiled coil. The tract at residues 1350–1402 (LQSLERRTNGQGNNAEEEGKEEEETGKSEQERKEGREEGKEEEGKMSKRKKEE) is disordered. Positions 1364 to 1373 (AEEEGKEEEE) are enriched in acidic residues. Residues 1374 to 1402 (TGKSEQERKEGREEGKEEEGKMSKRKKEE) show a composition bias toward basic and acidic residues. Residues 1462-1482 (CCSAFFMVNIVFIIVVLVLQL) form a helical membrane-spanning segment. The Cytoplasmic portion of the chain corresponds to 1483–1527 (QKDCLHIEWPLGPLVNQTRVQCGGGGGRDFEGEEWIMSRLQLEPM). The helical transmembrane segment at 1528 to 1548 (GFVFIVFFLIILFIQFLAMLF) threads the bilayer. Topologically, residues 1549-1851 (HRFGTFTHII…FLGTTNKRAK (303 aa)) are extracellular. Residues 1626 to 1658 (GKRQQNAQIPPRCEKGGNERGEESPTSLPAPPV) are disordered. The segment covering 1637–1648 (RCEKGGNERGEE) has biased composition (basic and acidic residues). Residue Asn1660 is glycosylated (N-linked (GlcNAc...) asparagine). The interval 1765-1851 (HSIFPSSSES…FLGTTNKRAK (87 aa)) is disordered. Basic and acidic residues predominate over residues 1781 to 1822 (GGGRGRGREQERDKCLEGKKEKFRQRVEEGPARCHRLEELFG). The span at 1823-1834 (KSRKGGPQKRGK) shows a compositional bias: basic residues.

It belongs to the chitin synthase family. Class IV subfamily. Post-translationally, may require proteolytic cleavage for activation.

Its subcellular location is the cell membrane. It carries out the reaction [(1-&gt;4)-N-acetyl-beta-D-glucosaminyl](n) + UDP-N-acetyl-alpha-D-glucosamine = [(1-&gt;4)-N-acetyl-beta-D-glucosaminyl](n+1) + UDP + H(+). Required for the synthesis of chitin. The protein is Chitin synthase of Meloidogyne artiellia (British root-knot nematode).